Here is a 500-residue protein sequence, read N- to C-terminus: Galactofuranose transporter ATP-binding protein YtfR (500 aa).

ABC transporter domains follow at residues 10 to 245 (LRTE…LGRE) and 259 to 497 (LSDK…IMNA). 42–49 (GENGAGKS) contacts ATP.

The protein belongs to the ABC transporter superfamily. The complex is composed of two ATP-binding proteins (YtfR), two transmembrane proteins (YtfT and YjfF) and a solute-binding protein (YtfQ).

Its subcellular location is the cell inner membrane. It catalyses the reaction D-galactofuranose(out) + ATP + H2O = D-galactofuranose(in) + ADP + phosphate + H(+). Its function is as follows. Part of the ABC transporter complex YtfQRT-YjfF involved in galactofuranose transport. Responsible for energy coupling to the transport system. The protein is Galactofuranose transporter ATP-binding protein YtfR (ytfR) of Escherichia coli O157:H7.